The sequence spans 457 residues: Cysteine desulfurase (457 aa).

Ala127, Thr128, Gln235, Ser255, and His257 together coordinate pyridoxal 5'-phosphate. N6-(pyridoxal phosphate)lysine is present on Lys258. A pyridoxal 5'-phosphate-binding site is contributed by Thr295. Cys381 functions as the Cysteine persulfide intermediate in the catalytic mechanism. Residue Cys381 participates in [2Fe-2S] cluster binding. Cys381 is a Zn(2+) binding site. Cys381 is modified (cysteine persulfide).

The protein belongs to the class-V pyridoxal-phosphate-dependent aminotransferase family. NifS/IscS subfamily. As to quaternary structure, homodimer. Component of the mitochondrial core iron-sulfur cluster (ISC) complex composed of NFS1, LYRM4, NDUFAB1, ISCU, FXN, and FDX2; this complex is a heterohexamer containing two copies of each monomer. Component of cyteine desulfurase complex composed of NFS1, LYRM4 and NDUFAB1; this complex contributes to the activation of cysteine desulfurase activity and NFS1 stabilization. Interacts (homodimer form) with ISCU (D-state); each monomer interacts with the C-terminal regions of each NFS1 monomer. Interacts with HSPA9. Interacts (via homodimer form) with FDX2. Interacts (via homodimer form) with FXN. Interacts with LYRM4. Component of a complex composed of FXN, NFS1, LYRM4 and ISCU. Monomer. Homodimer. Oligomer. Interacts with ISCU. Component of the cysteine desulfurase complex composed of NFS1 and LYRM4; this complex contributes to the activation of cysteine desulfurase activity. Interacts with MOCS3. The cofactor is pyridoxal 5'-phosphate. N-gluconoylated. In terms of processing, cysteine persulfide intermediate is reduced by thiol-containing molecules like glutathione and L-cysteine. Persulfide reduction is a rate-limiting step of cysteine desulfurase catalytic cycle. As to expression, predominantly expressed in heart and skeletal muscle. Also found in brain, liver and pancreas.

It is found in the mitochondrion. The protein localises to the cytoplasm. It localises to the nucleus. The protein resides in the cytoskeleton. Its subcellular location is the microtubule organizing center. It is found in the centrosome. It catalyses the reaction (sulfur carrier)-H + L-cysteine = (sulfur carrier)-SH + L-alanine. It carries out the reaction L-cysteinyl-[cysteine desulfurase] + L-cysteine = S-sulfanyl-L-cysteinyl-[cysteine desulfurase] + L-alanine. With respect to regulation, active only in complex with LYRM4. Functionally, cysteine desulfurase, of the core iron-sulfur cluster (ISC) assembly complex, that catalyzes the desulfuration of L-cysteine to L-alanine, as component of the cysteine desulfurase complex, leading to the formation of a cysteine persulfide intermediate at the active site cysteine residue and participates in the [2Fe-2S] clusters assembly on the scaffolding protein ISCU. The persulfide is then transferred on the flexible Cys loop from the catalytic site of NFS1 to the surface of NFS1. After the NFS1-linked persulfide sulfur is transferred to one of the conserved Cys residues of the scaffold, a reaction assisted by FXN. The core iron-sulfur cluster (ISC) assembly complex is involved in the de novo synthesis of a [2Fe-2S] cluster, the first step of the mitochondrial iron-sulfur protein biogenesis. This process is initiated by the cysteine desulfurase complex (NFS1:LYRM4:NDUFAB1) that produces persulfide which is delivered on the scaffold protein ISCU in a FXN-dependent manner. Then this complex is stabilized by FDX2 which provides reducing equivalents to accomplish the [2Fe-2S] cluster assembly. Finally, the [2Fe-2S] cluster is transferred from ISCU to chaperone proteins, including HSCB, HSPA9 and GLRX5. In terms of biological role, may catalyze the desulfuration of L-cysteine to L-alanine as component of the cysteine desulfurase complex (NFS1:LYRM4), leading to the formation of a cysteine persulfide intermediate. Acts as a sulfur donor for MOCS3 by transferring the sulfur of the cysteine persulfide intermediate on MOCS3. The polypeptide is Cysteine desulfurase (Homo sapiens (Human)).